The sequence spans 528 residues: Phosphoenolpyruvate carboxykinase (ATP) (528 aa).

Residues Arg56, Tyr192, and Lys198 each coordinate substrate. ATP is bound by residues Lys198, His217, and 233-241; that span reads GLSGTGKTT. Residues Lys198 and His217 each contribute to the Mn(2+) site. Asp254 serves as a coordination point for Mn(2+). Glu282, Arg319, and Thr444 together coordinate ATP. Arg319 contacts substrate.

It belongs to the phosphoenolpyruvate carboxykinase (ATP) family. Requires Mn(2+) as cofactor.

The protein resides in the cytoplasm. It carries out the reaction oxaloacetate + ATP = phosphoenolpyruvate + ADP + CO2. It participates in carbohydrate biosynthesis; gluconeogenesis. Involved in the gluconeogenesis. Catalyzes the conversion of oxaloacetate (OAA) to phosphoenolpyruvate (PEP) through direct phosphoryl transfer between the nucleoside triphosphate and OAA. This Lysinibacillus sphaericus (strain C3-41) protein is Phosphoenolpyruvate carboxykinase (ATP).